A 186-amino-acid chain; its full sequence is MINRNSGKDRDRSRSGDKELRINHRIKAREVRVIFNDGTQSVLPIEDAIKCARDVELDLVEISPNALPPVCKIIDYGKYKFHQEKRQKEQRKNQKIIKLKEVRMQPKIDTHDLDFKYKNILGFLKEGNKVKVTIRFRGRELAHTHLGYGILESILERVGDSNYVLESPAKMEGKTMFLIIAPKSRK.

A disordered region spans residues 1-20 (MINRNSGKDRDRSRSGDKEL).

This sequence belongs to the IF-3 family. Monomer.

The protein localises to the cytoplasm. Functionally, IF-3 binds to the 30S ribosomal subunit and shifts the equilibrium between 70S ribosomes and their 50S and 30S subunits in favor of the free subunits, thus enhancing the availability of 30S subunits on which protein synthesis initiation begins. The sequence is that of Translation initiation factor IF-3 from Borrelia duttonii (strain Ly).